The chain runs to 340 residues: Glycerol-3-phosphate dehydrogenase [NAD(P)+] (340 aa).

NADPH is bound by residues Ser-23, Trp-24, Arg-43, Lys-44, and Lys-113. The sn-glycerol 3-phosphate site is built by Lys-113, Gly-141, and Thr-143. Ala-145 is an NADPH binding site. Residues Lys-196, Asp-249, Ser-259, Arg-260, and Asn-261 each coordinate sn-glycerol 3-phosphate. Lys-196 serves as the catalytic Proton acceptor. Residue Arg-260 coordinates NADPH. Glu-286 is a binding site for NADPH.

The protein belongs to the NAD-dependent glycerol-3-phosphate dehydrogenase family.

The protein localises to the cytoplasm. The catalysed reaction is sn-glycerol 3-phosphate + NAD(+) = dihydroxyacetone phosphate + NADH + H(+). It carries out the reaction sn-glycerol 3-phosphate + NADP(+) = dihydroxyacetone phosphate + NADPH + H(+). Its pathway is membrane lipid metabolism; glycerophospholipid metabolism. Catalyzes the reduction of the glycolytic intermediate dihydroxyacetone phosphate (DHAP) to sn-glycerol 3-phosphate (G3P), the key precursor for phospholipid synthesis. This chain is Glycerol-3-phosphate dehydrogenase [NAD(P)+], found in Zymomonas mobilis subsp. mobilis (strain ATCC 31821 / ZM4 / CP4).